We begin with the raw amino-acid sequence, 231 residues long: Proteasome subunit alpha type-2 (231 aa).

The protein belongs to the peptidase T1A family. In terms of assembly, the 26S proteasome consists of a 20S proteasome core and two 19S regulatory subunits. The 20S proteasome core is composed of 28 subunits that are arranged in four stacked rings, resulting in a barrel-shaped structure. The two end rings are each formed by seven alpha subunits, and the two central rings are each formed by seven beta subunits. The catalytic chamber with the active sites is on the inside of the barrel.

It is found in the cytoplasm. It localises to the nucleus. In terms of biological role, the proteasome is a multicatalytic proteinase complex which is characterized by its ability to cleave peptides with Arg, Phe, Tyr, Leu, and Glu adjacent to the leaving group at neutral or slightly basic pH. The proteasome has an ATP-dependent proteolytic activity. The sequence is that of Proteasome subunit alpha type-2 from Trypanosoma brucei brucei.